Here is a 563-residue protein sequence, read N- to C-terminus: MTKDEDSGTTDGGYSTPDIAVQEKQDQPPAPEPEYATGFRLAAIMSTIFLSTLLAALDIGIVATAIPGITDDFHRLDDVGWYGGACFLLVGSSAPMWGKLYKYFSAQLVYLVSVVIFLVGSIVAAAAPNSAALIVGRALQGWGCSGTLGGSVLMISYVAEPQKRAMLIGMWMSVFMFSTIIGPLLGGAFTSEVTWRWCFWINLPVGGPVIALVVLFFEVPKHIKPAPATWVEILRQLDLPGFALLLTSLVCLTVALQWGGQTKSWSYGSVIATLVMWVVLTIAFFVVEWIQGDYAMVPLALLKPRLVWTNALYGWIANLANFQVLFYLPIYFQSIHGQSAIASGVNSLPFMAFFAAGSMLSGFLIGKTRLLQPYEFASGVLATVGAALLYTLDIDSSKARYIGPQVIFGIGIGLGNQVPMTALESFSKPEHIAPTTGVMLMCNSISGAYFVTAAQSIFANYMLKELASIAPDMDPIQVLTTGASEVSHVFQGAELEAVLAAYLAGIKDVFAFSLAGAAFTVVLSLAIPFKKLPNMFAGPSNGQEEEEGKKDGPAEKKEDEVAV.

The interval 1 to 32 (MTKDEDSGTTDGGYSTPDIAVQEKQDQPPAPE) is disordered. The next 14 helical transmembrane spans lie at 48–68 (IFLSTLLAALDIGIVATAIPG), 78–98 (DVGWYGGACFLLVGSSAPMWG), 108–128 (LVYLVSVVIFLVGSIVAAAAP), 138–158 (ALQGWGCSGTLGGSVLMISYV), 165–185 (AMLIGMWMSVFMFSTIIGPLL), 197–217 (WCFWINLPVGGPVIALVVLFF), 239–259 (LPGFALLLTSLVCLTVALQWG), 270–290 (VIATLVMWVVLTIAFFVVEWI), 312–332 (LYGWIANLANFQVLFYLPIYF), 345–365 (VNSLPFMAFFAAGSMLSGFLI), 374–394 (YEFASGVLATVGAALLYTLDI), 406–426 (VIFGIGIGLGNQVPMTALESF), 438–458 (VMLMCNSISGAYFVTAAQSIF), and 509–529 (VFAFSLAGAAFTVVLSLAIPF). Positions 538–563 (GPSNGQEEEEGKKDGPAEKKEDEVAV) are disordered. Basic and acidic residues predominate over residues 547 to 563 (EGKKDGPAEKKEDEVAV).

Belongs to the major facilitator superfamily. TCR/Tet family.

Its subcellular location is the cell membrane. Functionally, efflux pump; part of the gene cluster that mediates the biosynthesis of notoamide, a fungal indole alkaloid that belongs to a family of natural products containing a characteristic bicyclo[2.2.2]diazaoctane core. This is Efflux pump notK from Aspergillus sp. (strain MF297-2).